A 37-amino-acid chain; its full sequence is Conotoxin Bt1.8 (37 aa).

Positions proline 1–lysine 20 are excised as a propeptide. Disulfide bonds link cysteine 22-cysteine 28 and cysteine 23-cysteine 36. Cysteine 36 is subject to Cysteine amide.

It belongs to the conotoxin A superfamily. Expressed by the venom duct.

It localises to the secreted. In terms of biological role, alpha-conotoxins bind to the nicotinic acetylcholine receptors (nAChR) and inhibit them. This toxin inhibits mammalian alpha-3-beta-2/CHRNA3-CHRNB2 nAChR (IC(50)=9.4 nM (rat), IC(50)=8.8 nM (human)), as well as the subunit chimera alpha-6/alpha-3-beta-2-beta-3 nAChR (CHRNA6/CHRNA3-CHRNB2-CHRNB3)(IC(50)=2.1 nM (rat), IC(50)=1.7 nM (human)). Binds to rat alpha-6/alpha-3-beta-2-beta-3 more rapidly than to alpha-3-beta-2, and dissociates more rapidly from alpha-3-beta-2 than from alpha-6/alpha-3-beta-2-beta-3. The chain is Conotoxin Bt1.8 from Conus betulinus (Beech cone).